The sequence spans 467 residues: Proton extrusion protein PxcA (467 aa).

Residues 183–205 are disordered; sequence TSPPQLIRPRTEQNKKPRGKADT. Residues 191 to 203 show a composition bias toward basic and acidic residues; sequence PRTEQNKKPRGKA. The next 4 helical transmembrane spans lie at 249-269, 352-372, 391-411, and 427-447; these read FILLLIIVPLLTHQLSKALIV, IFSVGAFIWLLLVSKPSIMVL, IIILFTDVFVGFHSPHGWEVI, and FIFLFIATFPVILDTIFKYWI.

Belongs to the CemA family.

Its subcellular location is the cell inner membrane. Required for H(+) efflux immediately after light irradiation to form a rapid H(+) concentration gradient across the thylakoid membranes. Together with PxcL, contributes to transient H(+) uptake following dark to light transition. The sequence is that of Proton extrusion protein PxcA from Trichormus variabilis (strain ATCC 29413 / PCC 7937) (Anabaena variabilis).